A 173-amino-acid chain; its full sequence is Dual-action ribosomal maturation protein DarP (173 aa).

The protein belongs to the DarP family.

It is found in the cytoplasm. Member of a network of 50S ribosomal subunit biogenesis factors which assembles along the 30S-50S interface, preventing incorrect 23S rRNA structures from forming. Promotes peptidyl transferase center (PTC) maturation. The sequence is that of Dual-action ribosomal maturation protein DarP from Pseudomonas entomophila (strain L48).